Reading from the N-terminus, the 218-residue chain is Small ribosomal subunit protein uS3c (218 aa).

The KH type-2 domain maps to 47–118 (VQKNMRTSSG…KLNIAVTRIA (72 aa)).

It belongs to the universal ribosomal protein uS3 family. In terms of assembly, part of the 30S ribosomal subunit.

The protein resides in the plastid. It localises to the chloroplast. This chain is Small ribosomal subunit protein uS3c (rps3), found in Nicotiana sylvestris (Wood tobacco).